The following is a 301-amino-acid chain: Negative regulator of the PHO system (301 aa).

Residues phenylalanine 7–phenylalanine 297 enclose the Protein kinase domain. ATP contacts are provided by residues leucine 13–valine 21 and lysine 36. The active-site Proton acceptor is aspartate 133.

Belongs to the protein kinase superfamily. CMGC Ser/Thr protein kinase family. CDC2/CDKX subfamily. In terms of assembly, interacts with a number of cyclins.

The enzyme catalyses L-seryl-[protein] + ATP = O-phospho-L-seryl-[protein] + ADP + H(+). It carries out the reaction L-threonyl-[protein] + ATP = O-phospho-L-threonyl-[protein] + ADP + H(+). Its function is as follows. When phosphate concentrations are high it phosphorylates the PHO4 transcription factor thus establishing repression. The chain is Negative regulator of the PHO system (PHO85) from Eremothecium gossypii (strain ATCC 10895 / CBS 109.51 / FGSC 9923 / NRRL Y-1056) (Yeast).